The sequence spans 264 residues: Glutamate racemase (264 aa).

Residues 9-10 (DS) and 41-42 (YG) each bind substrate. C72 (proton donor/acceptor) is an active-site residue. 73–74 (NT) serves as a coordination point for substrate. Residue C183 is the Proton donor/acceptor of the active site. Residue 184–185 (TH) coordinates substrate.

This sequence belongs to the aspartate/glutamate racemases family.

The enzyme catalyses L-glutamate = D-glutamate. The protein operates within cell wall biogenesis; peptidoglycan biosynthesis. Functionally, provides the (R)-glutamate required for cell wall biosynthesis. This Geobacillus sp. (strain WCH70) protein is Glutamate racemase.